The chain runs to 473 residues: MLLIGYFAYKRTSNLTDYMLGGRSLGPAVTALSAGAADMSGWLLMGLPGAMFSTGLSGAWIVIGLCLGAWANWLYVAPRLRTYTEKAGNSITIPGFLENRFGDQTKLLRLFSGIVILVFFTFYVSSGMVSGGVLFNSILGMDYHTGLWIVTGVVVAYTLFGGFLAVSWTDFVQGIIMFAALILVPIVTFFHTGGAGDTVAEIRSVDPDMFNIFKGTSVLGIISLFAWGLGYFGQPHIIVRFMAITSVKEIKRARRIGMGWMILSAVGAVLTGLGGIAYYHQRGMTLKDPETIFIQLGNILFHPIITGFLISAILAAIMSTISSQLLVTSSSLVEDLYKSMFRRSASDKELVFLGRLAVLAVSIVALVLAWEKNNTILGLVSYAWAGFGASFGPVVLLSLFWKRMTKWGALAGMIVGAATVIIWANAGLSDFLYEMIPGFAASLLSVFFVSILTQAPSQAVTDQFNDYQDTMSQ.

12 helical membrane passes run 32–52 (LSAG…GAMF), 56–76 (LSGA…WLYV), 114–134 (IVIL…GGVL), 146–166 (GLWI…FLAV), 171–191 (FVQG…TFFH), 218–238 (VLGI…PHII), 256–276 (IGMG…LGGI), 299–319 (ILFH…AIMS), 350–370 (LVFL…VLAW), 376–396 (ILGL…PVVL), 408–428 (GALA…NAGL), and 431–451 (FLYE…FVSI).

Belongs to the sodium:solute symporter (SSF) (TC 2.A.21) family.

It localises to the cell membrane. It carries out the reaction L-proline(in) + Na(+)(in) = L-proline(out) + Na(+)(out). In terms of biological role, catalyzes the high-affinity uptake of extracellular proline. Important for the use of proline as a sole carbon and energy source or a sole nitrogen source. The polypeptide is High-affinity proline transporter PutP (Bacillus subtilis (strain 168)).